A 539-amino-acid polypeptide reads, in one-letter code: Phosphoenolpyruvate carboxykinase (ATP) (539 aa).

Residues Arg-64, Tyr-206, and Lys-212 each contribute to the substrate site. Residues Lys-212, His-231, and 247–255 (GLSGTGKTT) contribute to the ATP site. Mn(2+)-binding residues include Lys-212 and His-231. Asp-268 lines the Mn(2+) pocket. Residues Glu-296, Arg-332, 448–449 (RI), and Thr-454 contribute to the ATP site. Arg-332 is a binding site for substrate.

This sequence belongs to the phosphoenolpyruvate carboxykinase (ATP) family. Monomer. Requires Mn(2+) as cofactor.

The protein localises to the cytoplasm. It carries out the reaction oxaloacetate + ATP = phosphoenolpyruvate + ADP + CO2. It participates in carbohydrate biosynthesis; gluconeogenesis. Functionally, involved in the gluconeogenesis. Catalyzes the conversion of oxaloacetate (OAA) to phosphoenolpyruvate (PEP) through direct phosphoryl transfer between the nucleoside triphosphate and OAA. This is Phosphoenolpyruvate carboxykinase (ATP) from Salmonella choleraesuis (strain SC-B67).